Reading from the N-terminus, the 423-residue chain is Serine--tRNA ligase (423 aa).

230–232 (TAE) is a binding site for L-serine. 261 to 263 (RSE) is an ATP binding site. Glu284 contacts L-serine. 348 to 351 (EISS) provides a ligand contact to ATP. Ser383 provides a ligand contact to L-serine.

It belongs to the class-II aminoacyl-tRNA synthetase family. Type-1 seryl-tRNA synthetase subfamily. In terms of assembly, homodimer. The tRNA molecule binds across the dimer.

The protein resides in the cytoplasm. It carries out the reaction tRNA(Ser) + L-serine + ATP = L-seryl-tRNA(Ser) + AMP + diphosphate + H(+). The enzyme catalyses tRNA(Sec) + L-serine + ATP = L-seryl-tRNA(Sec) + AMP + diphosphate + H(+). Its pathway is aminoacyl-tRNA biosynthesis; selenocysteinyl-tRNA(Sec) biosynthesis; L-seryl-tRNA(Sec) from L-serine and tRNA(Sec): step 1/1. In terms of biological role, catalyzes the attachment of serine to tRNA(Ser). Is also able to aminoacylate tRNA(Sec) with serine, to form the misacylated tRNA L-seryl-tRNA(Sec), which will be further converted into selenocysteinyl-tRNA(Sec). In Levilactobacillus brevis (strain ATCC 367 / BCRC 12310 / CIP 105137 / JCM 1170 / LMG 11437 / NCIMB 947 / NCTC 947) (Lactobacillus brevis), this protein is Serine--tRNA ligase.